An 89-amino-acid chain; its full sequence is MALSKEQKTETLKEFGLHETDTGSPEAQIALLTVRIRQLTEHLKYHKHDHHSRRGLLLLVGRRKGLLKYLAENNVDRYRSLIERLGLRR.

Basic and acidic residues predominate over residues 1-21 (MALSKEQKTETLKEFGLHETD). The segment at 1–22 (MALSKEQKTETLKEFGLHETDT) is disordered.

Belongs to the universal ribosomal protein uS15 family. As to quaternary structure, part of the 30S ribosomal subunit. Forms a bridge to the 50S subunit in the 70S ribosome, contacting the 23S rRNA.

In terms of biological role, one of the primary rRNA binding proteins, it binds directly to 16S rRNA where it helps nucleate assembly of the platform of the 30S subunit by binding and bridging several RNA helices of the 16S rRNA. Forms an intersubunit bridge (bridge B4) with the 23S rRNA of the 50S subunit in the ribosome. The polypeptide is Small ribosomal subunit protein uS15 (Corynebacterium jeikeium (strain K411)).